An 890-amino-acid polypeptide reads, in one-letter code: UPF0182 protein Ppro_2689 (890 aa).

Helical transmembrane passes span 6–26, 50–70, 102–122, 157–177, 200–220, 244–264, and 266–286; these read FILI…LLAF, AGSG…NLLL, LGIP…AMQW, TITA…VLVY, LAIL…LDCF, TYRI…IGLW, and GAWR…VIGI.

The protein belongs to the UPF0182 family.

It localises to the cell membrane. The chain is UPF0182 protein Ppro_2689 from Pelobacter propionicus (strain DSM 2379 / NBRC 103807 / OttBd1).